The chain runs to 129 residues: MSSKPLYTILTVFNPIFIYFTKRDNLHTLRFKKDRAIKISEELFPDELCERCGRCCILHAYKTEDGIKTIYCEHLDPETKLCKVYKDRFKHRCLTVMEGILAGVFPKDCPYVKNLKNYEEPWFYRHLRD.

This is an uncharacterized protein from Methanocaldococcus jannaschii (strain ATCC 43067 / DSM 2661 / JAL-1 / JCM 10045 / NBRC 100440) (Methanococcus jannaschii).